The chain runs to 239 residues: MMDKEIENGSVNVDLLELEKFNQLAHRWWDPNSEFKPLHEINPLRLGYIDRHARLAGKDVLDVGCGGGILSESMAESGAQVTGIDLGDKALKVAKLHLLESGNKVNYRKSSVEALAAEQPHHYDVVTCMEMLEHVPDPVSTVRACAELAKPGGWVFFSTINRNPKSYLFAVIGAEYVLNLLPRGTHDYAKFIKPSELGRMAREAGLDVQEVIGMSYNPITKVYSLGQDTDVNYIMAFRA.

S-adenosyl-L-methionine-binding residues include arginine 45, glycine 64, aspartate 85, and methionine 129.

Belongs to the methyltransferase superfamily. UbiG/COQ3 family.

It carries out the reaction a 3-demethylubiquinol + S-adenosyl-L-methionine = a ubiquinol + S-adenosyl-L-homocysteine + H(+). The enzyme catalyses a 3-(all-trans-polyprenyl)benzene-1,2-diol + S-adenosyl-L-methionine = a 2-methoxy-6-(all-trans-polyprenyl)phenol + S-adenosyl-L-homocysteine + H(+). It participates in cofactor biosynthesis; ubiquinone biosynthesis. Functionally, O-methyltransferase that catalyzes the 2 O-methylation steps in the ubiquinone biosynthetic pathway. In Nitrosospira multiformis (strain ATCC 25196 / NCIMB 11849 / C 71), this protein is Ubiquinone biosynthesis O-methyltransferase.